The chain runs to 184 residues: Gastrokine-2 (184 aa).

The signal sequence occupies residues 1 to 20 (MKSLVAFLVVLSILRIQSQA). The BRICHOS domain maps to 54 to 151 (HSGSCSSTTI…LCKHIPLYEG (98 aa)). The cysteines at positions 81 and 143 are disulfide-linked.

Heterodimer with TFF1; disulfide linked. Interacts with TFF2.

Its subcellular location is the secreted. The polypeptide is Gastrokine-2 (Gkn2) (Rattus norvegicus (Rat)).